The sequence spans 166 residues: Probable protein tyrosine phosphatase type IVA A (166 aa).

In terms of domain architecture, Tyrosine-protein phosphatase spans 10–164 (NPASLVESST…YKSKKKSSCR (155 aa)). C52 and C107 are joined by a disulfide. D75 acts as the Proton donor in catalysis. C107 acts as the Phosphocysteine intermediate in catalysis. 108-113 (VAGLGR) lines the phosphate pocket. Residue R113 coordinates substrate. Cysteine methyl ester is present on C163. The S-farnesyl cysteine moiety is linked to residue C163. Positions 164-166 (RIM) are cleaved as a propeptide — removed in mature form.

It belongs to the protein-tyrosine phosphatase family.

It localises to the membrane. The enzyme catalyses O-phospho-L-tyrosyl-[protein] + H2O = L-tyrosyl-[protein] + phosphate. The sequence is that of Probable protein tyrosine phosphatase type IVA A from Dictyostelium discoideum (Social amoeba).